We begin with the raw amino-acid sequence, 111 residues long: Ribonuclease P protein component (111 aa).

Belongs to the RnpA family. As to quaternary structure, consists of a catalytic RNA component (M1 or rnpB) and a protein subunit.

The catalysed reaction is Endonucleolytic cleavage of RNA, removing 5'-extranucleotides from tRNA precursor.. RNaseP catalyzes the removal of the 5'-leader sequence from pre-tRNA to produce the mature 5'-terminus. It can also cleave other RNA substrates such as 4.5S RNA. The protein component plays an auxiliary but essential role in vivo by binding to the 5'-leader sequence and broadening the substrate specificity of the ribozyme. This chain is Ribonuclease P protein component, found in Alkaliphilus metalliredigens (strain QYMF).